The following is a 371-amino-acid chain: Ferrochelatase (371 aa).

2 residues coordinate Fe cation: His-218 and Glu-299.

It belongs to the ferrochelatase family.

The protein localises to the cytoplasm. The catalysed reaction is heme b + 2 H(+) = protoporphyrin IX + Fe(2+). The protein operates within porphyrin-containing compound metabolism; protoheme biosynthesis; protoheme from protoporphyrin-IX: step 1/1. Its function is as follows. Catalyzes the ferrous insertion into protoporphyrin IX. The protein is Ferrochelatase of Cupriavidus metallidurans (strain ATCC 43123 / DSM 2839 / NBRC 102507 / CH34) (Ralstonia metallidurans).